A 514-amino-acid chain; its full sequence is Citrate synthase 2, peroxisomal (514 aa).

Active-site residues include His-324, His-363, and Asp-419.

The protein belongs to the citrate synthase family. In terms of tissue distribution, widely expressed. Expressed throughout the shoot. Expressed in flower, silique, stem, cauline leaf, young leaf, mature leaf and senescent leaf.

It is found in the peroxisome. It catalyses the reaction oxaloacetate + acetyl-CoA + H2O = citrate + CoA + H(+). The protein operates within carbohydrate metabolism; tricarboxylic acid cycle; isocitrate from oxaloacetate: step 1/2. Peroxisomal citrate synthase required for the fatty acid respiration in seedlings, citrate being exported from peroxisomes into mitochondria during respiration of triacylglycerol (TAG). Indeed, complete respiration requires the transfer of carbon in the form of citrate from the peroxisome to the mitochondria. This is Citrate synthase 2, peroxisomal (CSY2) from Arabidopsis thaliana (Mouse-ear cress).